The following is a 133-amino-acid chain: Large ribosomal subunit protein uL15 (133 aa).

Residues 1 to 64 (MGLENLKPAK…QPLQRRLPKI (64 aa)) form a disordered region.

The protein belongs to the universal ribosomal protein uL15 family. In terms of assembly, part of the 50S ribosomal subunit.

Functionally, binds to the 23S rRNA. The polypeptide is Large ribosomal subunit protein uL15 (Helicobacter pylori (strain G27)).